The primary structure comprises 128 residues: Diacylglycerol kinase (128 aa).

Glutamate 34 contacts a divalent metal cation. 2 helical membrane passes run 35–55 (SAFRQIVILALFCIVLASYLA) and 58–78 (FLEWGLLILPCFLSVVVELIN). Catalysis depends on glutamate 75, which acts as the Proton acceptor. A divalent metal cation is bound at residue glutamate 82. Residues 107-127 (QLIGLIFWTLIWGRYLLALYL) form a helical membrane-spanning segment.

It belongs to the bacterial diacylglycerol kinase family. Requires Mg(2+) as cofactor.

It localises to the cell inner membrane. The catalysed reaction is a 1,2-diacyl-sn-glycerol + ATP = a 1,2-diacyl-sn-glycero-3-phosphate + ADP + H(+). Catalyzes the ATP-dependent phosphorylation of sn-l,2-diacylglycerol (DAG) to phosphatidic acid. Involved in the recycling of diacylglycerol produced as a by-product during membrane-derived oligosaccharide (MDO) biosynthesis. This chain is Diacylglycerol kinase (dgkA), found in Helicobacter pylori (strain ATCC 700392 / 26695) (Campylobacter pylori).